The sequence spans 131 residues: MSEIPGDLKFLKSHEWARVEGNGRVTVGISDHAQGLLGDLVYVELPEVGATAKANEQIAVVESVKAASDVYSPVSGTIVEVNSALSDKPETINEDAYGDGWMYVVELSNAEELNELLDPDAYAEALEDEDH.

One can recognise a Lipoyl-binding domain in the interval 24–106; it reads RVTVGISDHA…YGDGWMYVVE (83 aa). K65 is modified (N6-lipoyllysine).

It belongs to the GcvH family. As to quaternary structure, the glycine cleavage system is composed of four proteins: P, T, L and H. (R)-lipoate serves as cofactor.

Its function is as follows. The glycine cleavage system catalyzes the degradation of glycine. The H protein shuttles the methylamine group of glycine from the P protein to the T protein. The polypeptide is Glycine cleavage system H protein (Stenotrophomonas maltophilia (strain R551-3)).